Here is a 96-residue protein sequence, read N- to C-terminus: Large ribosomal subunit protein bL21 (96 aa).

A compositionally biased stretch (basic residues) spans 73-84 (KRRKRYQSRNGH). Positions 73 to 96 (KRRKRYQSRNGHRQQMTQIEVVSL) are disordered. Positions 85–96 (RQQMTQIEVVSL) are enriched in polar residues.

It belongs to the bacterial ribosomal protein bL21 family. As to quaternary structure, part of the 50S ribosomal subunit. Contacts protein L20.

This protein binds to 23S rRNA in the presence of protein L20. This is Large ribosomal subunit protein bL21 from Chlorobium phaeovibrioides (strain DSM 265 / 1930) (Prosthecochloris vibrioformis (strain DSM 265)).